A 411-amino-acid polypeptide reads, in one-letter code: Replication factor C subunit 2 (411 aa).

The interval 1–36 (MADFFNLKARQQAAAQASSSKTPTSKQESNRLQPWV) is disordered. The span at 11–27 (QQAAAQASSSKTPTSKQ) shows a compositional bias: low complexity. ATP is bound by residues Val-36, Arg-40, 73–81 (GPPGTGKTS), Asn-195, and Arg-253.

The protein belongs to the activator 1 small subunits family. In terms of assembly, heteropentamer of subunits RFC1, RFC2, RFC3, RFC4 and RFC5 that forms a complex with PCNA in the presence of ATP.

Its subcellular location is the nucleus. Functionally, the elongation of primed DNA templates by DNA polymerase delta and epsilon requires the action of the accessory proteins proliferating cell nuclear antigen (PCNA) and activator 1. Subunit 2 binds ATP and single-stranded DNA. The polypeptide is Replication factor C subunit 2 (RFC2) (Phaeosphaeria nodorum (strain SN15 / ATCC MYA-4574 / FGSC 10173) (Glume blotch fungus)).